A 366-amino-acid chain; its full sequence is Phospho-N-acetylmuramoyl-pentapeptide-transferase (366 aa).

Transmembrane regions (helical) follow at residues 3–23 (QIFIAGAVAFLAAVLFTPVLI), 55–75 (IAILVGITLGYIVAVLVGLVF), 80–100 (PGVSGWLVLGLTLALGGVGFA), 118–138 (AKLICQLVIAIAFGVMILQFP), 161–181 (IAVGGAVIGMILFLIFINIVI), 197–217 (LASGVTAIVMGAYVLITFWQF), 235–255 (PLDLAMLASAGLGACLGFLWW), 262–282 (IFMGDTGSLALGGLVAGLSIT), 287–307 (LLMIIVGAIFVLETVSVVIQV), and 341–361 (FWLLAALAAMTGFGLFYGEWL).

It belongs to the glycosyltransferase 4 family. MraY subfamily. It depends on Mg(2+) as a cofactor.

It is found in the cell membrane. It catalyses the reaction UDP-N-acetyl-alpha-D-muramoyl-L-alanyl-gamma-D-glutamyl-meso-2,6-diaminopimeloyl-D-alanyl-D-alanine + di-trans,octa-cis-undecaprenyl phosphate = di-trans,octa-cis-undecaprenyl diphospho-N-acetyl-alpha-D-muramoyl-L-alanyl-D-glutamyl-meso-2,6-diaminopimeloyl-D-alanyl-D-alanine + UMP. Its pathway is cell wall biogenesis; peptidoglycan biosynthesis. Catalyzes the initial step of the lipid cycle reactions in the biosynthesis of the cell wall peptidoglycan: transfers peptidoglycan precursor phospho-MurNAc-pentapeptide from UDP-MurNAc-pentapeptide onto the lipid carrier undecaprenyl phosphate, yielding undecaprenyl-pyrophosphoryl-MurNAc-pentapeptide, known as lipid I. In Corynebacterium urealyticum (strain ATCC 43042 / DSM 7109), this protein is Phospho-N-acetylmuramoyl-pentapeptide-transferase.